The sequence spans 97 residues: HssA/B-like protein 38 (97 aa).

Positions 1 to 29 (MTLFSSISSISNPMTSSKSSISSFGSGTS) are disordered.

This sequence belongs to the hssA/B family.

The protein is HssA/B-like protein 38 (hssl38) of Dictyostelium discoideum (Social amoeba).